A 463-amino-acid chain; its full sequence is NADH dehydrogenase [ubiquinone] iron-sulfur protein 2, mitochondrial (463 aa).

The N-terminal 33 residues, 1–33, are a transit peptide targeting the mitochondrion; it reads MAALRVLCGLRGVAAQVLRPGAGVRLPIQPSRG. N6-acetyllysine is present on lysine 62. Arginine 118 carries the post-translational modification Symmetric dimethylarginine. [4Fe-4S] cluster-binding residues include cysteine 326, cysteine 332, and cysteine 347.

It belongs to the complex I 49 kDa subunit family. Core subunit of respiratory chain NADH dehydrogenase (Complex I) which is composed of 45 different subunits. Component of the iron-sulfur (IP) fragment of the enzyme. Interacts with NDUFAF3. Interacts with NDUFAF7. Interacts with CERS2. [4Fe-4S] cluster is required as a cofactor. Dimethylation at Arg-118 by NDUFAF7 takes place after NDUFS2 assembles into the complex I, leading to stabilize the early intermediate complex.

Its subcellular location is the mitochondrion inner membrane. The catalysed reaction is a ubiquinone + NADH + 5 H(+)(in) = a ubiquinol + NAD(+) + 4 H(+)(out). Core subunit of the mitochondrial membrane respiratory chain NADH dehydrogenase (Complex I) which catalyzes electron transfer from NADH through the respiratory chain, using ubiquinone as an electron acceptor. Essential for the catalytic activity and assembly of complex I. Redox-sensitive, critical component of the oxygen-sensing pathway in the pulmonary vasculature which plays a key role in acute pulmonary oxygen-sensing and hypoxic pulmonary vasoconstriction. Plays an important role in carotid body sensing of hypoxia. Essential for glia-like neural stem and progenitor cell proliferation, differentiation and subsequent oligodendrocyte or neuronal maturation. The protein is NADH dehydrogenase [ubiquinone] iron-sulfur protein 2, mitochondrial (NDUFS2) of Gorilla gorilla gorilla (Western lowland gorilla).